A 425-amino-acid polypeptide reads, in one-letter code: Histidine--tRNA ligase 1 (425 aa).

This sequence belongs to the class-II aminoacyl-tRNA synthetase family. Homodimer.

It localises to the cytoplasm. The enzyme catalyses tRNA(His) + L-histidine + ATP = L-histidyl-tRNA(His) + AMP + diphosphate + H(+). This chain is Histidine--tRNA ligase 1, found in Bacillus anthracis.